The following is a 400-amino-acid chain: 11-beta-hydroxysteroid dehydrogenase type 2 (400 aa).

82–111 serves as a coordination point for NAD(+); that stretch reads TRAVLITGCDTGFGKETAKKLDAMGFTVLA. Substrate is bound at residue Ser-219. Tyr-232 functions as the Proton acceptor in the catalytic mechanism. Residues 378-400 are disordered; sequence PGQPGPVHDTTQDPNPSPTVSAL. Residues 389–400 show a composition bias toward polar residues; that stretch reads QDPNPSPTVSAL.

It belongs to the short-chain dehydrogenases/reductases (SDR) family. In terms of assembly, interacts with ligand-free cytoplasmic NR3C2. As to expression, highly expressed in kidney, adrenal gland and distal colon, and at much lower levels in lung, hypothalamus, hippocampus, and midbrain.

Its subcellular location is the microsome. The protein resides in the endoplasmic reticulum. It carries out the reaction an 11beta-hydroxysteroid + NAD(+) = an 11-oxosteroid + NADH + H(+). It catalyses the reaction corticosterone + NAD(+) = 11-dehydrocorticosterone + NADH + H(+). The enzyme catalyses 11beta,17beta-dihydroxyandrost-4-ene-3-one + NAD(+) = 17beta-hydroxyandrost-4-ene-3,11-dione + NADH + H(+). The catalysed reaction is 11beta-hydroxyandrost-4-ene-3,17-dione + NAD(+) = androst-4-ene-3,11,17-trione + NADH + H(+). It participates in steroid metabolism. With respect to regulation, inhibited by glycyrrhetinic acid. Induced by progesterone, through the Ihh signaling pathway. In terms of biological role, catalyzes the conversion of biologically active 11beta-hydroxyglucocorticoids (11beta-hydroxysteroid) such as corticosterone, to inactive 11-ketoglucocorticoids (11-oxosteroid) such as 11-dehydrocorticosterone, in the presence of NAD(+). Functions as a dehydrogenase (oxidase), thereby decreasing the concentration of active glucocorticoids, thus protecting the nonselective mineralocorticoid receptor from occupation by glucocorticoids. Plays an important role in maintaining glucocorticoids balance during preimplantation and protects the fetus from excessive maternal corticosterone exposure. Catalyzes the oxidation of 11beta-hydroxytestosterone (11beta,17beta-dihydroxyandrost-4-ene-3-one) to 11-ketotestosterone (17beta-hydroxyandrost-4-ene-3,11-dione), a major bioactive androgen. Catalyzes the conversion of 11beta-hydroxyandrostenedione (11beta-hydroxyandrost-4-ene-3,17-dione) to 11-ketoandrostenedione (androst-4-ene-3,11,17-trione), which can be further metabolized to 11-ketotestosterone. Converts 7-beta-25-dihydroxycholesterol to 7-oxo-25-hydroxycholesterol in vitro. 7-beta-25-dihydroxycholesterol (not 7-oxo-25-hydroxycholesterol) acts as a ligand for the G-protein-coupled receptor (GPCR) Epstein-Barr virus-induced gene 2 (EBI2) and may thereby regulate immune cell migration. The chain is 11-beta-hydroxysteroid dehydrogenase type 2 (Hsd11b2) from Rattus norvegicus (Rat).